Reading from the N-terminus, the 254-residue chain is tRNA (guanine-N(1)-)-methyltransferase (254 aa).

S-adenosyl-L-methionine is bound by residues Gly119 and 139-144 (IGDFVL).

It belongs to the RNA methyltransferase TrmD family. In terms of assembly, homodimer.

The protein resides in the cytoplasm. It catalyses the reaction guanosine(37) in tRNA + S-adenosyl-L-methionine = N(1)-methylguanosine(37) in tRNA + S-adenosyl-L-homocysteine + H(+). Specifically methylates guanosine-37 in various tRNAs. This is tRNA (guanine-N(1)-)-methyltransferase from Dechloromonas aromatica (strain RCB).